An 836-amino-acid polypeptide reads, in one-letter code: Spliceosome associated factor 3, U4/U6 recycling protein (836 aa).

HAT repeat units lie at residues 127-163 (EDFK…YEMS), 296-329 (KLPQ…FERD), 331-367 (RPNE…LLRR), 418-451 (KNMD…LERQ), and 453-486 (GDKE…FERE). The tract at residues 507-585 (RAIRPQKKVS…APGSFAVQKA (79 aa)) is disordered. A compositionally biased stretch (basic and acidic residues) spans 540–550 (IVKKVKGDDGG). Low complexity predominate over residues 558–579 (SNAKSSSAVSSSNASSTPAPGS). RRM domains lie at 593 to 668 (RTIF…ANDP) and 683 to 760 (SKVF…LSNP). Disordered stretches follow at residues 757-786 (LSNP…PRKG) and 811-830 (AMDV…DQFR). The span at 816 to 827 (EGTSTSQPLSND) shows a compositional bias: polar residues.

In terms of assembly, forms a complex composed of sart-3, terminal uridylyltransferase usip-1 and U6 snRNA; complex formation is mediated by usip-1 and sart-3 binding to U6 snRNA. Associates with U4 and U6 snRNP complexes, probably by interacting with U4 and U6 snRNAs. As to expression, ubiquitously expressed.

It localises to the nucleus. It is found in the nucleoplasm. Its function is as follows. U6 snRNP-binding protein that functions as a recycling factor of the splicing machinery. Promotes the initial reassembly of U4 and U6 snRNPs following their ejection from the spliceosome during its maturation. This is Spliceosome associated factor 3, U4/U6 recycling protein from Caenorhabditis elegans.